The chain runs to 660 residues: MSKKTSTIPTYGRYPELDRVRFPADMRNLSVDQLKQLADELRSETVDAVSTTGGHLGASLGVVELTVALHAVFNTPDDRIIWDVGHQAYPHKILTGRRDRIRTLRQPEGLSGFTRRAESEYDPFGAAHSSTSISAGLGMAVAHHLRAEEDPSYHERNVIAVIGDGSISAGMAYEAMNNAAVAGPGANRLIVVLNDNEMSIAPPVGSMSDYLSRLMSSRQFFSLRDLAGKVAKRLPGKIERTAKRAEEYARGMITGGTLFEELGFYYVGPVNGHDMSQLVPILRNLRDADDQGPILLHIITEKGRGYKPAEAAGDKYHAVSKFNVVTGEQKKAPAGPPSYTSIFSRELMRRAKTDDKLITITAAMPSGTGLNAFAKAYPDRFFDVGIAEQHAVTFAAGIASEGLRPFCAIYSTFLQRAYDQVVHDVALQNLPVRFAIDRAGLVGADGATHAGAFDLNYLCCLPNMVVMAPSDEVELLHATATACEYDAGPIAFRYPRGNGIGLDLPEKGEVLEIGKGRIVREARRAPNARGGVAILSLGPRMHESLRAADQLAAQGVPVTVADARFAKPIDKALVEDLARQHEVFITIEEGAIGGFSSLVVQHLAETGLLDKVKFRPMALPDRYIDHNTQDAQYEDAGLTAPHIVRTAADALGVEVAQQSA.

Thiamine diphosphate-binding positions include His86 and 127–129 (AHS). Asp164 serves as a coordination point for Mg(2+). Residues 165–166 (GS), Asn196, Tyr306, and Glu388 each bind thiamine diphosphate. Asn196 contributes to the Mg(2+) binding site.

Belongs to the transketolase family. DXPS subfamily. In terms of assembly, homodimer. Mg(2+) serves as cofactor. Thiamine diphosphate is required as a cofactor.

It carries out the reaction D-glyceraldehyde 3-phosphate + pyruvate + H(+) = 1-deoxy-D-xylulose 5-phosphate + CO2. It participates in metabolic intermediate biosynthesis; 1-deoxy-D-xylulose 5-phosphate biosynthesis; 1-deoxy-D-xylulose 5-phosphate from D-glyceraldehyde 3-phosphate and pyruvate: step 1/1. Functionally, catalyzes the acyloin condensation reaction between C atoms 2 and 3 of pyruvate and glyceraldehyde 3-phosphate to yield 1-deoxy-D-xylulose-5-phosphate (DXP). In Gluconobacter oxydans (strain 621H) (Gluconobacter suboxydans), this protein is 1-deoxy-D-xylulose-5-phosphate synthase.